Consider the following 428-residue polypeptide: Maltoporin (428 aa).

An N-terminal signal peptide occupies residues methionine 1–alanine 24.

It belongs to the porin LamB (TC 1.B.3) family. As to quaternary structure, homotrimer formed of three 18-stranded antiparallel beta-barrels, containing three independent channels.

It localises to the cell outer membrane. It catalyses the reaction beta-maltose(in) = beta-maltose(out). Involved in the transport of maltose and maltodextrins. In Photorhabdus laumondii subsp. laumondii (strain DSM 15139 / CIP 105565 / TT01) (Photorhabdus luminescens subsp. laumondii), this protein is Maltoporin.